The primary structure comprises 114 residues: Histone H3-6 (114 aa).

Basic residues predominate over residues 1–17 (NTGGKAPRKHIAHKQAK). The segment at 1-32 (NTGGKAPRKHIAHKQAKKSSAAAATGGVKKPH) is disordered. The span at 18–28 (KSSAAAATGGV) shows a compositional bias: low complexity.

This sequence belongs to the histone H3 family. The nucleosome is a histone octamer containing two molecules each of H2A, H2B, H3 and H4 assembled in one H3-H4 heterotetramer and two H2A-H2B heterodimers. The octamer wraps approximately 147 bp of DNA.

The protein resides in the nucleus. Its subcellular location is the chromosome. Core component of nucleosome. Nucleosomes wrap and compact DNA into chromatin, limiting DNA accessibility to the cellular machineries which require DNA as a template. Histones thereby play a central role in transcription regulation, DNA repair, DNA replication and chromosomal stability. DNA accessibility is regulated via a complex set of post-translational modifications of histones, also called histone code, and nucleosome remodeling. In Stylonychia lemnae (Ciliate), this protein is Histone H3-6 (H3-6).